A 77-amino-acid polypeptide reads, in one-letter code: U8-lycotoxin-Ls1a (77 aa).

Residues 1-20 form the signal peptide; that stretch reads MKLIIFTGLVLFAIVSLIEA. A propeptide spanning residues 21–26 is cleaved from the precursor; sequence QAENEK.

This sequence belongs to the neurotoxin 19 (CSTX) family. 08 (U8-Lctx) subfamily. Post-translationally, contains 4 disulfide bonds. In terms of tissue distribution, expressed by the venom gland.

It localises to the secreted. The sequence is that of U8-lycotoxin-Ls1a from Lycosa singoriensis (Wolf spider).